A 462-amino-acid polypeptide reads, in one-letter code: Elongation factor 1-alpha 1 (462 aa).

G2 carries the post-translational modification N,N,N-trimethylglycine. Residues 5–242 (KTHINIVVIG…DCILPPTRPT (238 aa)) enclose the tr-type G domain. Residues 14–21 (GHVDSGKS) are G1. Position 14–21 (14–21 (GHVDSGKS)) interacts with GTP. K36 bears the N6,N6,N6-trimethyllysine; alternate mark. Residue K36 is modified to N6,N6-dimethyllysine; alternate. K36 carries the post-translational modification N6-methyllysine; alternate. K55 is subject to N6,N6-dimethyllysine. Residues 70–74 (GITID) are G2. N6,N6,N6-trimethyllysine; by EEF1AKMT1 is present on K79. The segment at 91–94 (DAPG) is G3. 153-156 (NKMD) is a GTP binding site. Residues 153-156 (NKMD) are G4. An N6,N6,N6-trimethyllysine; alternate; by EEF1AKMT3 modification is found at K165. K165 carries the N6,N6-dimethyllysine; alternate; by EEF1AKMT3 modification. N6-acetyllysine; alternate is present on K165. Residue K165 is modified to N6-methyllysine; alternate; by EEF1AKMT3. K172 is modified (N6-acetyllysine). 194–196 (SGW) provides a ligand contact to GTP. The G5 stretch occupies residues 194-196 (SGW). At K273 the chain carries N6-acetyllysine. Residue S300 is modified to Phosphoserine; by TGFBR1. E301 is subject to 5-glutamyl glycerylphosphorylethanolamine. Position 318 is an N6,N6,N6-trimethyllysine; by EEF1AKMT2 (K318). E374 carries the 5-glutamyl glycerylphosphorylethanolamine modification. Residue K385 forms a Glycyl lysine isopeptide (Lys-Gly) (interchain with G-Cter in ubiquitin) linkage. K392 carries the post-translational modification N6-acetyllysine; alternate. At K392 the chain carries N6-succinyllysine; alternate. T432 is subject to Phosphothreonine; by PASK. K439 is subject to N6-acetyllysine.

The protein belongs to the TRAFAC class translation factor GTPase superfamily. Classic translation factor GTPase family. EF-Tu/EF-1A subfamily. In terms of assembly, found in a nuclear export complex with XPO5, EEF1A1, Ran and aminoacylated tRNA. Interacts with PARP1 and TXK. Interacts with KARS1. May interact with ERGIC2. Interacts with IFIT1 (via TPR repeats 4-7). Interacts with DLC1, facilitating distribution to the membrane periphery and ruffles upon growth factor stimulation. Interacts with ZPR1; the interaction occurs in a epidermal growth factor (EGF)-dependent manner. Interacts with PPP1R16B. Interacts with SPHK1 and SPHK2; both interactions increase SPHK1 and SPHK2 kinase activity. Interacts with guanyl-nucleotide exchange factor EEF1B2. Interacts (via middle-region) with HTATIP2 (via N-terminus); the interaction is direct and competes with EEF1A1 binding to guanyl-nucleotide exchange factor EEF1B2, thereby inhibiting GDP for GTP exchange and reactivation of EEF1A1. Interacts with tRNA. Post-translationally, ISGylated. In terms of processing, phosphorylated by TXK. Phosphorylation by PASK increases translation efficiency. Phosphorylated by ROCK2. Phosphorylation by TGFBR1 inhibits translation elongation. Trimethylated at Lys-79 by EEF1AKMT1. Methylated at Lys-165 by EEF1AKMT3, methylation by EEF1AKMT3 is dynamic as well as inducible by stress conditions, such as ER-stress, and plays a regulatory role on mRNA translation. Trimethylated at Lys-318 by EEF1AKMT2. Mono-, di-, and trimethylated at Lys-36 by EEF1AKMT4; trimethylated form is predominant. Methylation by EEF1AKMT4 contributes to the fine-tuning of translation rates for a subset of tRNAs. Trimethylated at Gly-2 by METTL13. Mono- and dimethylated at Lys-55 by METTL13; dimethylated form is predominant. Post-translationally, ubiquitinated at Lys-385 by RNF14 in response to ribosome collisions (ribosome stalling), leading to its degradation by the proteasome and rescue of stalled ribosomes.

The protein resides in the cytoplasm. It is found in the nucleus. It localises to the nucleolus. The protein localises to the cell membrane. The enzyme catalyses GTP + H2O = GDP + phosphate + H(+). Its function is as follows. Translation elongation factor that catalyzes the GTP-dependent binding of aminoacyl-tRNA (aa-tRNA) to the A-site of ribosomes during the elongation phase of protein synthesis. Base pairing between the mRNA codon and the aa-tRNA anticodon promotes GTP hydrolysis, releasing the aa-tRNA from EEF1A1 and allowing its accommodation into the ribosome. The growing protein chain is subsequently transferred from the P-site peptidyl tRNA to the A-site aa-tRNA, extending it by one amino acid through ribosome-catalyzed peptide bond formation. Also plays a role in the positive regulation of IFNG transcription in T-helper 1 cells as part of an IFNG promoter-binding complex with TXK and PARP1. Also plays a role in cytoskeleton organization by promoting actin bundling. The sequence is that of Elongation factor 1-alpha 1 (EEF1A1) from Equus caballus (Horse).